We begin with the raw amino-acid sequence, 84 residues long: Cell division topological specificity factor (84 aa).

Belongs to the MinE family.

In terms of biological role, prevents the cell division inhibition by proteins MinC and MinD at internal division sites while permitting inhibition at polar sites. This ensures cell division at the proper site by restricting the formation of a division septum at the midpoint of the long axis of the cell. This Pseudomonas entomophila (strain L48) protein is Cell division topological specificity factor.